The sequence spans 694 residues: U-box domain-containing protein 1 (694 aa).

The U-box domain maps to 292–366 (NIPDEFRCPI…HQWCYENNVK (75 aa)). ARM repeat units follow at residues 392 to 432 (SENK…LLAK), 435 to 474 (MDNR…NLSI), 476 to 516 (DNNK…SLSM), 519 to 558 (DCKV…NLAV), 560 to 599 (NPNK…VLLG), 601 to 641 (SEGL…GLCK), and 646 to 685 (LVAM…LLNR).

Interacts with LYK3. Binds to NORK/DMI2. In terms of processing, phosphorylated by LYK3 in vitro. Phosphorylated by NORK/DMI2. Present ubiquitously at very low levels during nonsymbiotic growth. Accumulates in roots and nodules during symbiotic growth with rhizobia and mycorrhiza.

Its subcellular location is the cell membrane. The catalysed reaction is S-ubiquitinyl-[E2 ubiquitin-conjugating enzyme]-L-cysteine + [acceptor protein]-L-lysine = [E2 ubiquitin-conjugating enzyme]-L-cysteine + N(6)-ubiquitinyl-[acceptor protein]-L-lysine.. The protein operates within protein modification; protein ubiquitination. Functionally, exhibits U-box-dependent E3 ubiquitin ligase activity in vitro. Negatively modulates successive stages of infection and development of rhizobial (e.g. Sinorhizobium meliloti) and arbuscular mycorrhizal fungi (AM, e.g. Rhizophagus irregularis) symbioses, in an ubiquitin ligase activity-dependent manner. Negative regulator of the LYK3 signaling pathway leading to nitrogen-fixing symbiosis (e.g. infection and nodulation) by rhizobia. May be involved in the discrimination of rhizobium strains producing variant Nod factors. This Medicago truncatula (Barrel medic) protein is U-box domain-containing protein 1.